A 274-amino-acid polypeptide reads, in one-letter code: MRSNNNNPLTRDEILSRYFPQYRPAVAASQGLSGGSCIIAHDTHRVVLRRHHDPDAPPAHFLRHYRALSQLPASLAPRALFYTPGWMAVEYLHGVVNSALPDADELAALLYHLHQQPRFGWRIALSPLLAQYWSCCDPARRTPFWLRRLKQLQKNGEPRPLRLAPLHMDVHGDNIVLTSAGLRLIDWEYAGDGDIALELAAVWVEDERQHRQLANAYAACARIDARQLWRQIRLWHPWVIMLKAGWFEYRWRQTGEQQFIRLADETWRQLRMKG.

Belongs to the thiamine kinase family.

It carries out the reaction thiamine + ATP = thiamine phosphate + ADP + H(+). The protein operates within cofactor biosynthesis; thiamine diphosphate biosynthesis; thiamine phosphate from thiamine: step 1/1. Its function is as follows. Catalyzes the ATP-dependent phosphorylation of thiamine to thiamine phosphate. Is involved in thiamine salvage. The chain is Thiamine kinase from Salmonella choleraesuis (strain SC-B67).